A 365-amino-acid chain; its full sequence is Alanine racemase (365 aa).

Lysine 32 functions as the Proton acceptor; specific for D-alanine in the catalytic mechanism. Lysine 32 bears the N6-(pyridoxal phosphate)lysine mark. Arginine 128 is a substrate binding site. Tyrosine 257 (proton acceptor; specific for L-alanine) is an active-site residue. Methionine 305 lines the substrate pocket.

This sequence belongs to the alanine racemase family. It depends on pyridoxal 5'-phosphate as a cofactor.

The enzyme catalyses L-alanine = D-alanine. The protein operates within amino-acid biosynthesis; D-alanine biosynthesis; D-alanine from L-alanine: step 1/1. In terms of biological role, catalyzes the interconversion of L-alanine and D-alanine. May also act on other amino acids. In Francisella tularensis subsp. holarctica (strain OSU18), this protein is Alanine racemase (alr).